Reading from the N-terminus, the 901-residue chain is HTH-type transcriptional regulator MalT (901 aa).

ATP is bound at residue 39 to 46; the sequence is SPAGYGKT. The region spanning 829 to 894 is the HTH luxR-type domain; that stretch reads ELIRTSPLTQ…DAVQHAQQLL (66 aa). Residues 853 to 872 constitute a DNA-binding region (H-T-H motif); the sequence is NEQIAGELAVAATTIKTHIR.

This sequence belongs to the MalT family. Monomer in solution. Oligomerizes to an active state in the presence of the positive effectors ATP and maltotriose.

Its activity is regulated as follows. Activated by ATP and maltotriose, which are both required for DNA binding. Functionally, positively regulates the transcription of the maltose regulon whose gene products are responsible for uptake and catabolism of malto-oligosaccharides. Specifically binds to the promoter region of its target genes, recognizing a short DNA motif called the MalT box. In Salmonella typhi, this protein is HTH-type transcriptional regulator MalT.